We begin with the raw amino-acid sequence, 298 residues long: MFSVGKKISFILPIKGVLQKLKDNAQKTVLLDATWYLPTDTKNGKKEYLESRLPGAQYFDIDEAKDHKNPLPHMLPPADEFASYVGKLGIDRNTNVIIYDRKGFFSSPRVFWTFKVFGHEHVFLFPNAFNAWKTEGLELETGEPRTPKPVVYEGAKLNKDLVASFDDIVKVIESPDAAGVHIVDARAHERFLGNVPESRPGLASGHIPTSINIPFTETTAAGITAPKPEEDLEKVFSSHGLTDKSVPIITSCGSGVTASVLFAALKECGFKDVRVYDESWSGYGKRANEDSSLLATGP.

In terms of domain architecture, Rhodanese 1 spans 24–141; the sequence is NAQKTVLLDA…WKTEGLELET (118 aa). Positions 142–175 are hinge; sequence GEPRTPKPVVYEGAKLNKDLVASFDDIVKVIESP. At serine 164 the chain carries Phosphoserine. One can recognise a Rhodanese 2 domain in the interval 176 to 292; it reads DAAGVHIVDA…YGKRANEDSS (117 aa). Position 190 (arginine 190) interacts with substrate. Cysteine 252 serves as the catalytic Cysteine persulfide intermediate.

It localises to the mitochondrion. It catalyses the reaction 2-oxo-3-sulfanylpropanoate + [thioredoxin]-dithiol = [thioredoxin]-disulfide + hydrogen sulfide + pyruvate + H(+). In terms of biological role, required for formation of the 2-thio group of the 5-methoxycarbonylmethyl-2-thiouridine modified base in some tRNAs. This Schizosaccharomyces pombe (strain 972 / ATCC 24843) (Fission yeast) protein is Probable 3-mercaptopyruvate sulfurtransferase (tum1).